The chain runs to 705 residues: RNA polymerase II degradation factor 1 (705 aa).

5 disordered regions span residues 1 to 20 (MSQQ…QVDA), 62 to 264 (AVTK…LQNV), 277 to 438 (EDTA…QAYY), 491 to 512 (VPQQ…QSQS), and 614 to 656 (MSQA…QQSQ). One can recognise a CUE domain in the interval 21 to 63 (EKKFKLDTLTELFPDWTNEDLIDLVHEFEDLETIIDKITTGAV). Residues 65-90 (KWDEVKKPSKKDRQQKEPAGDVEHIH) are compositionally biased toward basic and acidic residues. Low complexity predominate over residues 91-112 (AGSAAAAFGASAQAQGAPASLQ). Over residues 119 to 140 (GHQNNAKPYQRQSKYSNSPRQG) the composition is skewed to polar residues. Composition is skewed to low complexity over residues 162-173 (AKSTASSTSWAA) and 184-205 (QAPE…QTEE). Basic and acidic residues-rich tracts occupy residues 206–217 (PVAKESQTEKKV), 248–258 (KHAENASKKPQ), and 299–310 (AEHESFPIEDGA). Low complexity-rich tracts occupy residues 331 to 358 (AAAT…ANAN), 399 to 438 (QHVV…QAYY), and 500 to 512 (QSSQ…QSQS). The span at 614-623 (MSQAGNQATH) shows a compositional bias: polar residues. Low complexity predominate over residues 624-656 (QSQSSQNDDSSSASAANPQQGQQGGANSQQQSQ).

Belongs to the DEF1 family. As to quaternary structure, homodimer; may form higher order oligomers. Interacts with the large RNA polymerase II subunit RPO21; the interaction is direct and serves to bridge RPO21 to the Elongin complex in a manner dependent on transcription stress. Interacts with RAD26. Post-translationally, ubiquitinated. In terms of processing, proteolytically cleaved by the proteasome in response to transcription stress; the resulting N-terminal form constitutes the activated nuclear form and the C-terminal portion is degraded.

It localises to the cytoplasm. The protein localises to the nucleus. It is found in the chromosome. Its subcellular location is the telomere. Functionally, recruits the ubiquitination machinery to RNA polymerase II for polyubiquitination, removal and degradation, when the transcription-coupled repair (TCR) factor RAD26 fails to efficiently displace stalled RNA polymerase II. Also involved in telomere length regulation. Binds DNA. This Eremothecium gossypii (strain ATCC 10895 / CBS 109.51 / FGSC 9923 / NRRL Y-1056) (Yeast) protein is RNA polymerase II degradation factor 1 (DEF1).